The chain runs to 282 residues: Ammonia transport outward protein 2 (282 aa).

The tract at residues 1 to 34 (MSDREQSSGNTAFENPKALDSSEGEFISENNDQS) is disordered. At Ser-2 the chain carries N-acetylserine. Phosphoserine occurs at positions 2, 7, 21, 22, 28, and 40. The Extracellular segment spans residues 2–86 (SDREQSSGNT…GLAPAPVHKF (85 aa)). The chain crosses the membrane as a helical span at residues 87–107 (ANPAPLGLSGFALTTFVLSMF). The Cytoplasmic segment spans residues 108–119 (NARAQGITIPNV). Residues 120–140 (VVGCAMFYGGLVQLIAGIWEI) form a helical membrane-spanning segment. Over 141-150 (ALENTFGGTA) the chain is Extracellular. A helical transmembrane segment spans residues 151–171 (LCSFGGFWLSFGAIYIPWFGI). The Cytoplasmic segment spans residues 172–184 (LDAYKDKESDLGN). The helical transmembrane segment at 185–205 (ALGFYLLGWALFTFGLSVCTM) threads the bilayer. Residues 206–207 (KS) are Extracellular-facing. The helical transmembrane segment at 208–228 (TIMFFALFFLLAVTFLLLSIA) threads the bilayer. Residues 229–238 (NFTGEVGVTR) are Cytoplasmic-facing. A helical membrane pass occupies residues 239–259 (AGGVLGVIVAFIAWYNAYAGI). Residues 260 to 282 (ATRQNSYIMVHPFALPSNDKVFF) are Extracellular-facing.

The protein belongs to the acetate uptake transporter (AceTr) (TC 2.A.96) family.

The protein localises to the cell membrane. Transporter protein required for ammonia export. Involved in acetate resistance. The sequence is that of Ammonia transport outward protein 2 (ATO2) from Saccharomyces cerevisiae (strain ATCC 204508 / S288c) (Baker's yeast).